The chain runs to 305 residues: Hepatitis A virus cellular receptor 1 homolog (305 aa).

An N-terminal signal peptide occupies residues 1–21 (MNQIQVFISGLILLLPGAVDS). Positions 22 to 122 (YVEVKGVVGH…PGWFNDQKVT (101 aa)) constitute an Ig-like V-type domain. Topologically, residues 22-237 (YVEVKGVVGH…GKPQKNPTKG (216 aa)) are extracellular. Intrachain disulfides connect Cys37-Cys108, Cys49-Cys60, and Cys55-Cys107. The disordered stretch occupies residues 129–185 (PEIPTRPPTRPTTTRPTATGRPTTISTRSTHVPTSIRVSTSTPPTSTHTWTHKPEPT). Low complexity-rich tracts occupy residues 139-152 (PTTT…RPTT) and 161-177 (PTSI…STHT). N-linked (GlcNAc...) asparagine glycosylation occurs at Asn208. A helical transmembrane segment spans residues 238 to 258 (FYVGICIAALLLLLLVSTVAI). Topologically, residues 259-305 (TRYILMKRKSASLSVVAFRVSKIEALQNAAVVHSRAEDNIYIVEDRP) are cytoplasmic.

The protein belongs to the immunoglobulin superfamily. TIM family. Interacts with STAM. Interacts with SELPLG. Expressed by stimulated T-cells. Expressed during primary antigen stimulation. Expressed at higher levels on B rather than T-cells, both constitutively and after activation.

It is found in the cell membrane. Phosphatidylserine receptor that plays an important functional role in regulatory B-cells homeostasis including generation, expansion and suppressor functions. As P-selectin/SELPLG ligand, plays a specialized role in activated but not naive T-cell trafficking during inflammatory responses. Controls thereby T-cell accumulation in the inflamed central nervous system (CNS) and the induction of autoimmune disease. Also regulates expression of various anti-inflammatory cytokines and co-inhibitory ligands including IL10. Acts as a regulator of T-cell proliferation. May play a role in kidney injury and repair. The chain is Hepatitis A virus cellular receptor 1 homolog (Havcr1) from Mus musculus (Mouse).